We begin with the raw amino-acid sequence, 156 residues long: MADKPIAKAAHSVLVLHGPNLNLLGTREPEIYGATTLADINAALAERASASGVSLAHFQSNHEGALVDRIQAAKSEGIAFIIINPAAYTHTSVALRDALAGVAIPYIEVHLSNVHRREPFRHHSYLADQAVGVICGLGWRGYLAALDYIVSQHGGG.

The active-site Proton acceptor is tyrosine 32. 3 residues coordinate substrate: asparagine 84, histidine 90, and aspartate 97. Histidine 110 serves as the catalytic Proton donor. Substrate contacts are provided by residues 111-112 (LS) and arginine 121.

Belongs to the type-II 3-dehydroquinase family. In terms of assembly, homododecamer.

It carries out the reaction 3-dehydroquinate = 3-dehydroshikimate + H2O. Its pathway is metabolic intermediate biosynthesis; chorismate biosynthesis; chorismate from D-erythrose 4-phosphate and phosphoenolpyruvate: step 3/7. Catalyzes a trans-dehydration via an enolate intermediate. This Ralstonia nicotianae (strain ATCC BAA-1114 / GMI1000) (Ralstonia solanacearum) protein is 3-dehydroquinate dehydratase 1 (aroQ1).